Consider the following 689-residue polypeptide: Glycine--tRNA ligase beta subunit (689 aa).

This sequence belongs to the class-II aminoacyl-tRNA synthetase family. As to quaternary structure, tetramer of two alpha and two beta subunits.

The protein resides in the cytoplasm. The enzyme catalyses tRNA(Gly) + glycine + ATP = glycyl-tRNA(Gly) + AMP + diphosphate. The polypeptide is Glycine--tRNA ligase beta subunit (Salmonella dublin (strain CT_02021853)).